The sequence spans 1120 residues: Transcription-repair-coupling factor (1120 aa).

One can recognise a Helicase ATP-binding domain in the interval 591–756; sequence DLSNGMLMDR…MTGLKELSII (166 aa). 604–611 is a binding site for ATP; sequence GDVGFGKT. The DEEQ box motif lies at 709 to 712; that stretch reads DEEQ. The Helicase C-terminal domain maps to 777 to 931; sequence IIRDALLHEH…GFTIASHDMD (155 aa).

It in the N-terminal section; belongs to the UvrB family. The protein in the C-terminal section; belongs to the helicase family. RecG subfamily.

Its subcellular location is the cytoplasm. Its function is as follows. Couples transcription and DNA repair by recognizing RNA polymerase (RNAP) stalled at DNA lesions. Mediates ATP-dependent release of RNAP and its truncated transcript from the DNA, and recruitment of nucleotide excision repair machinery to the damaged site. The polypeptide is Transcription-repair-coupling factor (Rickettsia bellii (strain RML369-C)).